The following is a 669-amino-acid chain: 5-taurinomethyluridine-[tRNA] synthase subunit MTO1, mitochondrial (669 aa).

Residues 1–25 constitute a mitochondrion transit peptide; that stretch reads MFLLRGRGHWAAASLGRRLPLRRLR. Residues 42 to 47, Val154, Ser217, and Gln406 each bind FAD; that span reads GGGHAG. The residue at position 507 (Lys507) is an N6-methyllysine.

The protein belongs to the MnmG family. Homodimer; forms a dimer in the presence of potassium. Interacts with GTPBP3; forms the GTPBP3-MTO1 complex composed of homodimers of GTPBP3 and MTO1. It depends on FAD as a cofactor. Ubiquitously expressed in various tissues, but with markedly elevated expression in tissues of high metabolic rates.

The protein resides in the mitochondrion. The catalysed reaction is 5,10-methylenetetrahydrofolate + uridine(34) in tRNA + taurine + GTP + A + H2O = 5-taurinomethyluridine(34) in tRNA + 7,8-dihydrofolate + GDP + AH2 + phosphate + H(+). Its function is as follows. Component of the GTPBP3-MTO1 complex that catalyzes the 5-taurinomethyluridine (taum(5)U) modification at the 34th wobble position (U34) of mitochondrial tRNAs (mt-tRNAs), which plays a role in mt-tRNA decoding and mitochondrial translation. Taum(5)U formation on mammalian mt-tRNA requires the presence of both GTPBP3-mediated GTPase activity and MTO1 catalytic activity. The sequence is that of 5-taurinomethyluridine-[tRNA] synthase subunit MTO1, mitochondrial from Mus musculus (Mouse).